The primary structure comprises 209 residues: Potassium-transporting ATPase KdpC subunit (209 aa).

Residues 18 to 38 (ALALFVLLGLGLGYSLVATGI) traverse the membrane as a helical segment.

Belongs to the KdpC family. The system is composed of three essential subunits: KdpA, KdpB and KdpC.

It is found in the cell inner membrane. Part of the high-affinity ATP-driven potassium transport (or Kdp) system, which catalyzes the hydrolysis of ATP coupled with the electrogenic transport of potassium into the cytoplasm. This subunit acts as a catalytic chaperone that increases the ATP-binding affinity of the ATP-hydrolyzing subunit KdpB by the formation of a transient KdpB/KdpC/ATP ternary complex. The protein is Potassium-transporting ATPase KdpC subunit of Xanthomonas campestris pv. campestris (strain 8004).